A 142-amino-acid chain; its full sequence is Large ribosomal subunit protein uL13 (142 aa).

It belongs to the universal ribosomal protein uL13 family. Part of the 50S ribosomal subunit.

In terms of biological role, this protein is one of the early assembly proteins of the 50S ribosomal subunit, although it is not seen to bind rRNA by itself. It is important during the early stages of 50S assembly. In Vibrio cholerae serotype O1 (strain M66-2), this protein is Large ribosomal subunit protein uL13.